The chain runs to 366 residues: Glucose 1-dehydrogenase 2 (366 aa).

Residue Cys-39 coordinates Zn(2+). Substrate is bound at residue Ser-41. The Zn(2+) site is built by His-66 and Glu-67. Substrate is bound by residues Asn-90, Glu-116, Gln-152, and Asp-156. Gln-152 is a Zn(2+) binding site. Residues 212-214, 277-279, 305-307, and Lys-354 each bind NADP(+); these read NRR, FGF, and LIN. Asn-307 is a binding site for substrate.

This sequence belongs to the zinc-containing alcohol dehydrogenase family. Glucose 1-dehydrogenase subfamily. It depends on Zn(2+) as a cofactor.

It catalyses the reaction D-glucose + NAD(+) = D-glucono-1,5-lactone + NADH + H(+). It carries out the reaction D-glucose + NADP(+) = D-glucono-1,5-lactone + NADPH + H(+). In terms of biological role, catalyzes the NAD(P)(+)-dependent oxidation of D-glucose to D-gluconate via gluconolactone. Can utilize both NAD(+) and NADP(+) as electron acceptor. Is involved in the degradation of glucose through a non-phosphorylative variant of the Entner-Doudoroff pathway. In Caldivirga maquilingensis (strain ATCC 700844 / DSM 13496 / JCM 10307 / IC-167), this protein is Glucose 1-dehydrogenase 2.